Reading from the N-terminus, the 147-residue chain is CLAVATA3/ESR (CLE)-related protein 4C (147 aa).

Residues 1–21 (MATNTMLCLFVISVVLALAFA) form the signal peptide. Residues 21 to 83 (ATNKKGDEEP…SNQLPNNNWM (63 aa)) form a required for secretion from the host cytoplasm to the host apoplasm region. N-linked (GlcNAc...) asparagine glycosylation occurs at asparagine 32. 2 disordered regions span residues 57 to 86 (GADATRGGGAVYGGNLKSNQLPNNNWMAPP) and 116 to 147 (RKTGMHSQRHHEETTLEQEKRVAGAGPDPIHH). Over residues 125–137 (HHEETTLEQEKRV) the composition is skewed to basic and acidic residues. A CLE motif is present at residues 136-147 (RVAGAGPDPIHH).

Belongs to the CLV3/ESR signal peptide family. As to expression, highly expressed exclusively within the dorsal esophageal gland cell during syncytium formation in host plants.

It is found in the secreted. Its subcellular location is the host cytoplasm. The protein resides in the host extracellular space. It localises to the extracellular space. The protein localises to the apoplast. Mimics host plant CLE extracellular signal peptides that regulate cell fate. May play a role in the differentiation or division of feeding cells (syncytia) induced in plant roots during infection. This is CLAVATA3/ESR (CLE)-related protein 4C (CLE-4C) from Globodera rostochiensis (Golden nematode worm).